Reading from the N-terminus, the 75-residue chain is RNA-binding protein KhpA (75 aa).

A KH domain is found at 29-75 (SIILELKVSPEDMGKVIGKQGRIAKAIRTVVKAAAIKENKKVVVEII).

It belongs to the KhpA RNA-binding protein family. Forms a complex with KhpB.

It is found in the cytoplasm. Functionally, a probable RNA chaperone. Forms a complex with KhpB which binds to cellular RNA and controls its expression. Plays a role in peptidoglycan (PG) homeostasis and cell length regulation. The sequence is that of RNA-binding protein KhpA from Clostridium perfringens (strain 13 / Type A).